The following is a 473-amino-acid chain: Probable cytosolic iron-sulfur protein assembly protein 1 (473 aa).

Residues 1–25 form a disordered region; sequence MPSSTPGGSLKHLSDLTPPSQDRTW. WD repeat units follow at residues 11 to 58 and 62 to 104; these read KHLS…LLST and GHKR…GRAE. The interval 112 to 133 is disordered; it reads GGLAEADRQEGDDTDGDEEDED. Residues 123–133 are compositionally biased toward acidic residues; the sequence is DDTDGDEEDED. 4 WD repeats span residues 144–183, 191–230, 235–313, and 341–380; these read GHDS…DNNF, EHSG…WGQV, GHEG…KPPP, and MHDL…KPPV. The interval 377–405 is disordered; the sequence is KPPVHTTSEQDKPDSARETQKANGERTAP. Positions 384–400 are enriched in basic and acidic residues; the sequence is SEQDKPDSARETQKANG. The WD 7 repeat unit spans residues 438–473; the sequence is SQQQNFDNSEMDHANEEEVLLSTGDDGVVRVWTLER.

The protein belongs to the WD repeat CIA1 family.

Its function is as follows. Essential component of the cytosolic iron-sulfur (Fe/S) protein assembly machinery. Required for the maturation of extramitochondrial Fe/S proteins. This Coccidioides immitis (strain RS) (Valley fever fungus) protein is Probable cytosolic iron-sulfur protein assembly protein 1.